The primary structure comprises 111 residues: Large ribosomal subunit protein uL24 (111 aa).

Belongs to the universal ribosomal protein uL24 family. Part of the 50S ribosomal subunit.

In terms of biological role, one of two assembly initiator proteins, it binds directly to the 5'-end of the 23S rRNA, where it nucleates assembly of the 50S subunit. One of the proteins that surrounds the polypeptide exit tunnel on the outside of the subunit. This chain is Large ribosomal subunit protein uL24, found in Streptococcus pneumoniae (strain Hungary19A-6).